The following is a 287-amino-acid chain: Phosphoribosylaminoimidazole-succinocarboxamide synthase (287 aa).

Belongs to the SAICAR synthetase family.

It carries out the reaction 5-amino-1-(5-phospho-D-ribosyl)imidazole-4-carboxylate + L-aspartate + ATP = (2S)-2-[5-amino-1-(5-phospho-beta-D-ribosyl)imidazole-4-carboxamido]succinate + ADP + phosphate + 2 H(+). Its pathway is purine metabolism; IMP biosynthesis via de novo pathway; 5-amino-1-(5-phospho-D-ribosyl)imidazole-4-carboxamide from 5-amino-1-(5-phospho-D-ribosyl)imidazole-4-carboxylate: step 1/2. The chain is Phosphoribosylaminoimidazole-succinocarboxamide synthase from Neisseria meningitidis serogroup C (strain 053442).